A 34-amino-acid polypeptide reads, in one-letter code: Mu-theraphotoxin-Df1a (34 aa).

3 disulfides stabilise this stretch: Cys-2–Cys-16, Cys-9–Cys-21, and Cys-15–Cys-28. Phe-34 carries the post-translational modification Phenylalanine amide.

The protein belongs to the neurotoxin 10 (Hwtx-1) family. 54 (ProTx-1) subfamily. C-terminal amidation is important for the high potency of the toxin. In terms of tissue distribution, expressed by the venom gland.

Its subcellular location is the secreted. In terms of biological role, inhibits sodium channel Nav1.7/SCN9A with high potency (IC(50)=117 nM) and Nav1.2/SCN2A, Nav1.3/SCN3A, Nav1.6/SCN8A and Nav1.5/SCN5 with weaker potency. Also inhibits voltage-gated calcium channel Cav3.1/CACNA1G, Cav3.2/CACNA1H and Cav3.3/CACNA1I. This Davus fasciatus (Costa Rican tiger rump) protein is Mu-theraphotoxin-Df1a.